We begin with the raw amino-acid sequence, 253 residues long: Phosphate import ATP-binding protein PstB (253 aa).

An ABC transporter domain is found at 8 to 248; the sequence is IQVRDLDLFY…PRDKRTEDYI (241 aa). 40–47 provides a ligand contact to ATP; it reads GPSGCGKS.

Belongs to the ABC transporter superfamily. Phosphate importer (TC 3.A.1.7) family. As to quaternary structure, the complex is composed of two ATP-binding proteins (PstB), two transmembrane proteins (PstC and PstA) and a solute-binding protein (PstS).

The protein resides in the cell membrane. The catalysed reaction is phosphate(out) + ATP + H2O = ADP + 2 phosphate(in) + H(+). In terms of biological role, part of the ABC transporter complex PstSACB involved in phosphate import. Responsible for energy coupling to the transport system. The polypeptide is Phosphate import ATP-binding protein PstB (Clostridium perfringens (strain ATCC 13124 / DSM 756 / JCM 1290 / NCIMB 6125 / NCTC 8237 / Type A)).